Here is a 275-residue protein sequence, read N- to C-terminus: Probable histone chaperone asf-1 (275 aa).

Acidic residues-rich tracts occupy residues 157 to 166 (EDPVAEPVED), 183 to 207 (DGQE…EVDL), and 230 to 247 (KMED…DDEP). A disordered region spans residues 157 to 275 (EDPVAEPVED…SDKTNNEMVQ (119 aa)). Positions 265-275 (LSDKTNNEMVQ) are enriched in basic and acidic residues.

Belongs to the ASF1 family. Interacts with histone H3 and histone H4.

The protein resides in the nucleus. Functionally, histone chaperone that facilitates histone deposition and histone exchange and removal during nucleosome assembly and disassembly. This is Probable histone chaperone asf-1 from Caenorhabditis elegans.